The sequence spans 85 residues: Large ribosomal subunit protein bL27 (85 aa).

Residues 1–10 (MAQKKGGGST) show a composition bias toward gly residues. The interval 1-20 (MAQKKGGGSTRNGRDSQPKM) is disordered.

The protein belongs to the bacterial ribosomal protein bL27 family.

The sequence is that of Large ribosomal subunit protein bL27 from Methylibium petroleiphilum (strain ATCC BAA-1232 / LMG 22953 / PM1).